Consider the following 903-residue polypeptide: Pentatricopeptide repeat-containing protein At3g02330, mitochondrial (903 aa).

Residues 1–31 constitute a mitochondrion transit peptide; sequence MAESLRLLHMTRSVVSFNRCLTEKISYRRVP. 20 PPR repeats span residues 47-81, 82-112, 113-143, 144-178, 179-213, 214-244, 245-279, 280-314, 346-380, 381-415, 416-446, 447-481, 482-515, 516-550, 567-601, 602-636, 637-667, 668-702, 703-738, and 739-769; these read STTN…GFRP, TTFV…MPLR, DVVS…MPVR, DVVS…GIEF, DGRT…GCDT, DVVA…IPEK, NSVS…NAGV, SQSI…DFAA, NRQS…GLGF, DEIS…SLSL, DVCV…MRRR, DAVS…RIEP, DEFT…GMAS, NSSV…ANVS, MCVS…GITP, DKFT…ELQS, DVYI…SLRR, DFVT…NIKP, NHVT…GLDP, and QLPH…MPFE. Residues 774–850 are type E motif; that stretch reads IWRTLLGVCT…EPGCSWVELK (77 aa). A type E(+) motif region spans residues 851 to 881; it reads DELHVFLVGDKAHPRWEEIYEELGLIYSEMK.

This sequence belongs to the PPR family. PCMP-E subfamily. As to quaternary structure, interacts with MORF1/RIP8.

Its subcellular location is the mitochondrion. Functionally, involved in C-to-U editing of mitochondrial RNA. Required for RNA editing at 8 sites in 6 different mRNAs in mitochondria. This Arabidopsis thaliana (Mouse-ear cress) protein is Pentatricopeptide repeat-containing protein At3g02330, mitochondrial (PCMP-E90).